The chain runs to 601 residues: Aspartate--tRNA(Asp/Asn) ligase (601 aa).

Residue Glu173 participates in L-aspartate binding. The aspartate stretch occupies residues 197-200; sequence QLFK. Residue Arg219 coordinates L-aspartate. ATP is bound by residues 219-221 and Gln228; that span reads RDE. An L-aspartate-binding site is contributed by His456. Glu490 is an ATP binding site. An L-aspartate-binding site is contributed by Arg497. 542–545 contacts ATP; the sequence is GWDR. The interval 566–601 is disordered; that stretch reads GGGYDPLTQAPAPITAEQRRESGVDAVPDDETAPQA. A compositionally biased stretch (acidic residues) spans 592–601; sequence VPDDETAPQA.

The protein belongs to the class-II aminoacyl-tRNA synthetase family. Type 1 subfamily. In terms of assembly, homodimer.

The protein localises to the cytoplasm. It carries out the reaction tRNA(Asx) + L-aspartate + ATP = L-aspartyl-tRNA(Asx) + AMP + diphosphate. Functionally, aspartyl-tRNA synthetase with relaxed tRNA specificity since it is able to aspartylate not only its cognate tRNA(Asp) but also tRNA(Asn). Reaction proceeds in two steps: L-aspartate is first activated by ATP to form Asp-AMP and then transferred to the acceptor end of tRNA(Asp/Asn). In Beutenbergia cavernae (strain ATCC BAA-8 / DSM 12333 / CCUG 43141 / JCM 11478 / NBRC 16432 / NCIMB 13614 / HKI 0122), this protein is Aspartate--tRNA(Asp/Asn) ligase.